The primary structure comprises 289 residues: Acetyl-coenzyme A carboxylase carboxyl transferase subunit beta (289 aa).

Residues 34–289 form the CoA carboxyltransferase N-terminal domain; sequence MWVKCNKCGE…KLINMHKNSF (256 aa). 4 residues coordinate Zn(2+): Cys-38, Cys-41, Cys-57, and Cys-60. Residues 38 to 60 form a C4-type zinc finger; it reads CNKCGEILYQNDLEKNYMACNLC.

Belongs to the AccD/PCCB family. As to quaternary structure, acetyl-CoA carboxylase is a heterohexamer composed of biotin carboxyl carrier protein (AccB), biotin carboxylase (AccC) and two subunits each of ACCase subunit alpha (AccA) and ACCase subunit beta (AccD). Zn(2+) is required as a cofactor.

The protein localises to the cytoplasm. The catalysed reaction is N(6)-carboxybiotinyl-L-lysyl-[protein] + acetyl-CoA = N(6)-biotinyl-L-lysyl-[protein] + malonyl-CoA. It functions in the pathway lipid metabolism; malonyl-CoA biosynthesis; malonyl-CoA from acetyl-CoA: step 1/1. Functionally, component of the acetyl coenzyme A carboxylase (ACC) complex. Biotin carboxylase (BC) catalyzes the carboxylation of biotin on its carrier protein (BCCP) and then the CO(2) group is transferred by the transcarboxylase to acetyl-CoA to form malonyl-CoA. In Clostridium botulinum (strain Loch Maree / Type A3), this protein is Acetyl-coenzyme A carboxylase carboxyl transferase subunit beta.